Reading from the N-terminus, the 459-residue chain is Glycosyl hydrolase family 109 protein 1 (459 aa).

Residues 1–31 (MHNIHRRHFLKAAGAVTAGLVTANIALNANA) constitute a signal peptide (tat-type signal). Residues 64–65 (ER), Asp-86, 135–138 (WEWH), 155–156 (EV), and Asn-184 contribute to the NAD(+) site. Substrate contacts are provided by residues Tyr-213, Arg-232, 244 to 247 (YPTH), and Tyr-326. An NAD(+)-binding site is contributed by Tyr-244.

This sequence belongs to the Gfo/Idh/MocA family. Glycosyl hydrolase 109 subfamily. NAD(+) serves as cofactor. In terms of processing, predicted to be exported by the Tat system. The position of the signal peptide cleavage has not been experimentally proven.

Glycosidase. This Shewanella sp. (strain MR-7) protein is Glycosyl hydrolase family 109 protein 1.